The following is a 630-amino-acid chain: Putative lipase atg15 (630 aa).

Topologically, residues 1 to 20 are cytoplasmic; sequence MKSSQRRIKRHAMRDMSIST. A helical; Signal-anchor for type II membrane protein transmembrane segment spans residues 21 to 40; the sequence is LLLSVVLLPSVVSANDHVYF. Residues 41–630 lie on the Lumenal side of the membrane; the sequence is NPPSPGSPFL…WGSDIEHYEI (590 aa). Asparagine 200, asparagine 222, asparagine 280, and asparagine 304 each carry an N-linked (GlcNAc...) asparagine glycan. Serine 320 (charge relay system) is an active-site residue. An N-linked (GlcNAc...) asparagine glycan is attached at asparagine 466. Residues 577–589 are compositionally biased toward polar residues; the sequence is SVTAPPFSTSTSS. Positions 577–599 are disordered; it reads SVTAPPFSTSTSSDHVRADHSIG.

Belongs to the AB hydrolase superfamily. Lipase family. As to quaternary structure, binds to both phosphatidylinositol (PI) and phosphatidylinositol 3,5-bisphosphate (PIP2).

Its subcellular location is the endosome. It localises to the multivesicular body membrane. The protein resides in the prevacuolar compartment membrane. The enzyme catalyses a triacylglycerol + H2O = a diacylglycerol + a fatty acid + H(+). Its function is as follows. Lipase which is essential for lysis of subvacuolar cytoplasm to vacuole targeted bodies and intravacuolar autophagic bodies. Involved in the lysis of intravacuolar multivesicular body (MVB) vesicles. The intravacuolar membrane disintegration by atg15 is critical to life span extension. This Aspergillus clavatus (strain ATCC 1007 / CBS 513.65 / DSM 816 / NCTC 3887 / NRRL 1 / QM 1276 / 107) protein is Putative lipase atg15 (atg15).